The chain runs to 637 residues: MGSPRLAALLLSQPLLFICLAVSAQVACPCLPRWTSHCLLAFRVDKHFAGLQCGWFPLLVRKSKSSHEFEVCWRHWTPSPFQRKLLGSPSLSQESHRISTHFLAISHRGLRTKRTQPSAAEGIEHLPGAGSQKHGGPEFSFDLLPEVQAIRVTIPPGPEANVRLCYQWALECEDMSSPFDTQKIVSGGHTVDLPYEFLLPCMCIEASYLQEDTVRHKKCPFRSWPEAYGSDFWKSIRFTDYSQHSQMVMALTLRCPLKLEASLCWRQDPVTPCKILPNATAKESEGWYILENVDLHPQLCFKFSFENSSHVECPHQSGSLPSWTVSMDTQAQQLILHFSTRTYATFSAAWSNPGLGLDSSMTPVYSISQTQGSVPVTLNLIIPFLRQGSCILVWRSDVQFAWKHLLCPDVSHRHLGLLILALLGLTTLLGVVLVLFCRRLLPGPGRTRPVLLLHAADSEAQRRLVGALAELLRTALGGGRDVIVDLWEGTHVARIGPLPWLWAARERVAREQGTVLLLWSCAGPSTACSGDPQTASLRTLSCAAPRQLLLAYFSRLCAKGDIPGPLRALPRYRLLRDLPRLLRALDARPATLATSWSHLGAKECLKSRLELCHLLELEAAKDDYHGSTNSPCGFSCL.

A signal peptide spans 1–24 (MGSPRLAALLLSQPLLFICLAVSA). The Extracellular segment spans residues 25-415 (QVACPCLPRW…LCPDVSHRHL (391 aa)). Residues Asn-278 and Asn-307 are each glycosylated (N-linked (GlcNAc...) asparagine). The helical transmembrane segment at 416-436 (GLLILALLGLTTLLGVVLVLF) threads the bilayer. Topologically, residues 437-637 (CRRLLPGPGR…TNSPCGFSCL (201 aa)) are cytoplasmic. The 137-residue stretch at 447–583 (TRPVLLLHAA…LLRDLPRLLR (137 aa)) folds into the SEFIR domain.

As to quaternary structure, forms heterodimers with IL17RE; the heterodimer binds IL17C.

The protein localises to the cell membrane. In terms of biological role, specific functional receptor for IL17C, signaling through the NF-kappa-B and MAPK pathways. Requires TRAF3IP2 /ACT1 for signaling. Crucial regulator in innate immunity to bacterial pathogens. The polypeptide is Interleukin-17 receptor E (Il17re) (Rattus norvegicus (Rat)).